Consider the following 377-residue polypeptide: Putative F-box only protein 10 (377 aa).

The region spanning 1–46 is the F-box domain; it reads MVSVNLPWELVEEILYRVPPQSLARFRTVCKQWNSLFDDNKFVNDH.

The sequence is that of Putative F-box only protein 10 (FBX10) from Arabidopsis thaliana (Mouse-ear cress).